Here is a 296-residue protein sequence, read N- to C-terminus: Arginase (296 aa).

Mn(2+) contacts are provided by H98, D124, H126, and D128. L-arginine is bound by residues N130, S137, and D178. 2 residues coordinate Mn(2+): D225 and D227. Residues D227 and T239 each coordinate L-arginine.

This sequence belongs to the arginase family. Monomer. Homodimer; dimerization is dispensable for catalytic activity. Mn(2+) is required as a cofactor.

It catalyses the reaction L-arginine + H2O = urea + L-ornithine. The protein operates within nitrogen metabolism; urea cycle; L-ornithine and urea from L-arginine: step 1/1. With respect to regulation, substitution of the loosely bound surface exposed Mn(2+) with Mg(2+), Zn(2+), Ni(2+) or Co(2+) results in similar catalytic activity, substitution with Cd(2+) and Cu(2+) reduces catalytic activity and substitution with Hg(2+) and Ca(2+) inhibits the enzyme. Inhibited by L-norvaline. Functionally, catalyzes the hydrolysis of L-arginine into urea and L-ornithine, which is a precursor for polyamine biosynthesis. By depleting host L-arginine, a substrate for nitric oxide synthase (NOS), prevents the production of nitric oxide (NO) by host activated macrophages, and thus allows the parasite to evade host immune response. This is Arginase from Entamoeba histolytica (strain ATCC 30459 / HM-1:IMSS / ABRM).